Here is a 437-residue protein sequence, read N- to C-terminus: Trigger factor (437 aa).

One can recognise a PPIase FKBP-type domain in the interval 165–251 (GDLVVIDFKG…LHTIKEKEKI (87 aa)).

The protein belongs to the FKBP-type PPIase family. Tig subfamily.

It is found in the cytoplasm. The enzyme catalyses [protein]-peptidylproline (omega=180) = [protein]-peptidylproline (omega=0). Functionally, involved in protein export. Acts as a chaperone by maintaining the newly synthesized protein in an open conformation. Functions as a peptidyl-prolyl cis-trans isomerase. The polypeptide is Trigger factor (Nitratiruptor sp. (strain SB155-2)).